A 350-amino-acid polypeptide reads, in one-letter code: Ferredoxin--NADP reductase (350 aa).

Residues Thr-25, Glu-44, Gln-52, Tyr-57, Val-97, Phe-132, Asp-298, and Ser-339 each contribute to the FAD site.

Belongs to the ferredoxin--NADP reductase type 2 family. In terms of assembly, homodimer. The cofactor is FAD.

The enzyme catalyses 2 reduced [2Fe-2S]-[ferredoxin] + NADP(+) + H(+) = 2 oxidized [2Fe-2S]-[ferredoxin] + NADPH. The protein is Ferredoxin--NADP reductase of Chlorobium limicola (strain DSM 245 / NBRC 103803 / 6330).